Here is a 551-residue protein sequence, read N- to C-terminus: 2,3-bisphosphoglycerate-independent phosphoglycerate mutase (551 aa).

2 residues coordinate Mn(2+): Asp-22 and Ser-74. Ser-74 functions as the Phosphoserine intermediate in the catalytic mechanism. Substrate-binding positions include His-135, 165-166 (RD), Arg-201, Arg-208, and 281-284 (RGDR). Mn(2+) is bound at residue Asp-319. Lys-356 provides a ligand contact to substrate. Mn(2+) contacts are provided by Asp-424, His-428, Asp-465, His-466, and His-495.

It belongs to the BPG-independent phosphoglycerate mutase family. As to quaternary structure, monomer. It depends on Mn(2+) as a cofactor.

The protein resides in the cytoplasm. It catalyses the reaction (2R)-2-phosphoglycerate = (2R)-3-phosphoglycerate. The protein operates within carbohydrate degradation; glycolysis; pyruvate from D-glyceraldehyde 3-phosphate: step 3/5. In terms of biological role, catalyzes the interconversion of 2-phosphoglycerate (2-PGA) and 3-phosphoglycerate (3-PGA). This is 2,3-bisphosphoglycerate-independent phosphoglycerate mutase from Trypanosoma brucei brucei (strain 927/4 GUTat10.1).